Consider the following 258-residue polypeptide: Sugar fermentation stimulation protein homolog (258 aa).

This sequence belongs to the SfsA family.

The protein is Sugar fermentation stimulation protein homolog of Marinomonas sp. (strain MWYL1).